The primary structure comprises 742 residues: Phosphoribosylformylglycinamidine synthase subunit PurL (742 aa).

His-53 is an active-site residue. 2 residues coordinate ATP: Tyr-56 and Lys-95. Glu-97 lines the Mg(2+) pocket. Substrate is bound by residues 98 to 101 and Arg-120; that span reads SHNH. Catalysis depends on His-99, which acts as the Proton acceptor. Asp-121 is a binding site for Mg(2+). Residue Gln-244 coordinates substrate. Asp-274 contributes to the Mg(2+) binding site. 318–320 provides a ligand contact to substrate; it reads ESQ. Positions 501 and 538 each coordinate ATP. Asn-539 contacts Mg(2+). Ser-541 serves as a coordination point for substrate.

This sequence belongs to the FGAMS family. In terms of assembly, monomer. Part of the FGAM synthase complex composed of 1 PurL, 1 PurQ and 2 PurS subunits.

It is found in the cytoplasm. It catalyses the reaction N(2)-formyl-N(1)-(5-phospho-beta-D-ribosyl)glycinamide + L-glutamine + ATP + H2O = 2-formamido-N(1)-(5-O-phospho-beta-D-ribosyl)acetamidine + L-glutamate + ADP + phosphate + H(+). Its pathway is purine metabolism; IMP biosynthesis via de novo pathway; 5-amino-1-(5-phospho-D-ribosyl)imidazole from N(2)-formyl-N(1)-(5-phospho-D-ribosyl)glycinamide: step 1/2. In terms of biological role, part of the phosphoribosylformylglycinamidine synthase complex involved in the purines biosynthetic pathway. Catalyzes the ATP-dependent conversion of formylglycinamide ribonucleotide (FGAR) and glutamine to yield formylglycinamidine ribonucleotide (FGAM) and glutamate. The FGAM synthase complex is composed of three subunits. PurQ produces an ammonia molecule by converting glutamine to glutamate. PurL transfers the ammonia molecule to FGAR to form FGAM in an ATP-dependent manner. PurS interacts with PurQ and PurL and is thought to assist in the transfer of the ammonia molecule from PurQ to PurL. This Limosilactobacillus reuteri (strain DSM 20016) (Lactobacillus reuteri) protein is Phosphoribosylformylglycinamidine synthase subunit PurL.